A 400-amino-acid polypeptide reads, in one-letter code: Endoplasmin (400 aa).

Lysine 1 is subject to N6-succinyllysine. N-linked (GlcNAc...) asparagine glycosylation occurs at asparagine 42. At serine 44 the chain carries Phosphoserine. Lysine 76 is modified (N6-acetyllysine). 2 N-linked (GlcNAc...) asparagine glycosylation sites follow: asparagine 78 and asparagine 99. Lysine 230 carries the N6-succinyllysine modification. Residues isoleucine 346–leucine 400 form a disordered region. Residues alanine 350 to glutamine 387 are compositionally biased toward acidic residues. Phosphothreonine is present on threonine 379. Residues glutamate 388–leucine 400 are compositionally biased toward basic and acidic residues. Residues lysine 397–leucine 400 carry the Prevents secretion from ER motif.

It belongs to the heat shock protein 90 family. In terms of assembly, homodimer; disulfide-linked. Component of an EIF2 complex at least composed of CELF1/CUGBP1, CALR, CALR3, EIF2S1, EIF2S2, HSP90B1 and HSPA5. Part of a large chaperone multiprotein complex comprising DNAJB11, HSP90B1, HSPA5, HYOU, PDIA2, PDIA4, PDIA6, PPIB, SDF2L1, UGGT1 and very small amounts of ERP29, but not, or at very low levels, CALR nor CANX. Interacts with AIMP1; regulates its retention in the endoplasmic reticulum. Hyperglycosylated form interacts with OS9; promoting its degradation by the endoplasmic reticulum associated degradation (ERAD). Interacts with CNPY3. This interaction is disrupted in the presence of ATP. Interacts with TLR4 and TLR9, but not with TLR3. Interacts with MZB1 in a calcium-dependent manner. Interacts with METTL23. Interacts with IL1B; the interaction facilitates cargo translocation into the ERGIC. Interacts with EIF2AK3. Post-translationally, phosphorylated by CK2. N-glycosylated cotranslationally at Asn-217 by STT3A-containing OST-A complex: this glycosylation is constitutive. In response to various stress, 5 additional facultative sites (Asn-62, Asn-107, Asn-445, Asn-481 and Asn-502) can be glycosylated post-translationally by STT3B-containing OST-B complex, leading to a hyperglycosylated form that is degraded by the ER-associated degradation (ERAD) pathway. In normal conditions, the OST-A complex together with CCDC134 prevent glycosylation at facultative sites during protein folding, thereby preventing hyperglycosylation. Mechanistically, nascent HSP90B1 is tethered during translation to a specialized CCDC134-containing translocon that forms a microenvironment for its folding, in which STT3A associates with the SRT pseudosubstrate motif, and prevents access to facultative glycosylation sites until folding is completed, rendering its facultative sites inaccessible to the OST-B complex.

Its subcellular location is the endoplasmic reticulum lumen. The protein localises to the sarcoplasmic reticulum lumen. The protein resides in the melanosome. It catalyses the reaction ATP + H2O = ADP + phosphate + H(+). In terms of biological role, ATP-dependent chaperone involved in the processing of proteins in the endoplasmic reticulum, regulating their transport. Together with MESD, acts as a modulator of the Wnt pathway by promoting the folding of LRP6, a coreceptor of the canonical Wnt pathway. When associated with CNPY3, required for proper folding of Toll-like receptors. Promotes folding and trafficking of TLR4 to the cell surface. May participate in the unfolding of cytosolic leaderless cargos (lacking the secretion signal sequence) such as the interleukin 1/IL-1 to facilitate their translocation into the ERGIC (endoplasmic reticulum-Golgi intermediate compartment) and secretion; the translocation process is mediated by the cargo receptor TMED10. The protein is Endoplasmin (HSP90B1) of Mesocricetus auratus (Golden hamster).